The chain runs to 283 residues: MTVQTSKNPQVDIAEDNAFFPSEYSLSQYTSPVSDLDGVDYPKPYRGKHKILVIAADERYLPTDNGKLFSTGNHPIETLLPLYHLHAAGFEFEVATISGLMTKFEYWAMPHKDEKVMPFFEQHKSLFRNPKKLADVVASLNADSEYAAIFVPGGHGALIGLPESQDVAAALQWAIKNDRFVISLCHGPAAFLALRHGDNPLNGYSICAFPDAADKQTPEIGYMPGHLTWYFGEELKKMGMNIINDDITGRVHKDRKVLTGDSPFAANALGKLAAQEMLAAYAD.

Positions 86, 91, and 123 each coordinate Zn(2+). Cys-185 serves as the catalytic Nucleophile.

This sequence belongs to the peptidase C56 family. HchA subfamily. As to quaternary structure, homodimer.

It localises to the cytoplasm. The enzyme catalyses N(omega)-(1-hydroxy-2-oxopropyl)-L-arginyl-[protein] + H2O = lactate + L-arginyl-[protein] + H(+). It carries out the reaction N(6)-(1-hydroxy-2-oxopropyl)-L-lysyl-[protein] + H2O = lactate + L-lysyl-[protein] + H(+). The catalysed reaction is S-(1-hydroxy-2-oxopropyl)-L-cysteinyl-[protein] + H2O = lactate + L-cysteinyl-[protein] + H(+). It catalyses the reaction N(omega)-(1-hydroxy-2-oxoethyl)-L-arginyl-[protein] + H2O = L-arginyl-[protein] + glycolate + H(+). The enzyme catalyses N(6)-(1-hydroxy-2-oxoethyl)-L-lysyl-[protein] + H2O = glycolate + L-lysyl-[protein] + H(+). It carries out the reaction S-(1-hydroxy-2-oxoethyl)-L-cysteinyl-[protein] + H2O = glycolate + L-cysteinyl-[protein] + H(+). The catalysed reaction is N(2)-(1-hydroxy-2-oxopropyl)-dGTP + H2O = lactate + dGTP + H(+). It catalyses the reaction N(2)-(1-hydroxy-2-oxopropyl)-GTP + H2O = lactate + GTP + H(+). The enzyme catalyses N(2)-(1-hydroxy-2-oxopropyl)-GDP + H2O = lactate + GDP + H(+). It carries out the reaction N(2)-(1-hydroxy-2-oxopropyl)-GMP + H2O = lactate + GMP + H(+). The catalysed reaction is N(2)-(1-hydroxy-2-oxoethyl)-dGTP + H2O = dGTP + glycolate + H(+). It catalyses the reaction N(2)-(1-hydroxy-2-oxoethyl)-GTP + H2O = glycolate + GTP + H(+). The enzyme catalyses N(2)-(1-hydroxy-2-oxoethyl)-GDP + H2O = glycolate + GDP + H(+). It carries out the reaction N(2)-(1-hydroxy-2-oxoethyl)-GMP + H2O = glycolate + GMP + H(+). The catalysed reaction is an N(2)-(1-hydroxy-2-oxopropyl)-guanosine in RNA + H2O = a guanosine in RNA + lactate + H(+). It catalyses the reaction an N(2)-(1-hydroxy-2-oxopropyl)-2'-deoxyguanosine in DNA + H2O = a 2'-deoxyguanosine in DNA + lactate + H(+). The enzyme catalyses an N(2)-(1-hydroxy-2-oxoethyl)-guanosine in RNA + H2O = a guanosine in RNA + glycolate + H(+). It carries out the reaction an N(2)-(1-hydroxy-2-oxoethyl)-2'-deoxyguanosine in DNA + H2O = a 2'-deoxyguanosine in DNA + glycolate + H(+). In terms of biological role, protein and nucleotide deglycase that catalyzes the deglycation of the Maillard adducts formed between amino groups of proteins or nucleotides and reactive carbonyl groups of glyoxals. Thus, functions as a protein deglycase that repairs methylglyoxal- and glyoxal-glycated proteins, and releases repaired proteins and lactate or glycolate, respectively. Deglycates cysteine, arginine and lysine residues in proteins, and thus reactivates these proteins by reversing glycation by glyoxals. Acts on early glycation intermediates (hemithioacetals and aminocarbinols), preventing the formation of Schiff bases and advanced glycation endproducts (AGE). Also functions as a nucleotide deglycase able to repair glycated guanine in the free nucleotide pool (GTP, GDP, GMP, dGTP) and in DNA and RNA. Is thus involved in a major nucleotide repair system named guanine glycation repair (GG repair), dedicated to reversing methylglyoxal and glyoxal damage via nucleotide sanitization and direct nucleic acid repair. Plays an important role in protecting cells from carbonyl stress. The polypeptide is Protein/nucleic acid deglycase HchA (Shigella sonnei (strain Ss046)).